Here is a 110-residue protein sequence, read N- to C-terminus: Endoribonuclease SymE (110 aa).

The SpoVT-AbrB domain occupies 29 to 74 (SRYPEYTRIPAITLKGQWLEDAGFTTGTQVDVRVMNGCIVLTAQQP).

This sequence belongs to the SymE family.

Its subcellular location is the cytoplasm. Functionally, involved in the degradation and recycling of damaged RNA. It is itself a target for degradation by the ATP-dependent protease Lon. The protein is Endoribonuclease SymE of Salmonella paratyphi C (strain RKS4594).